Here is a 484-residue protein sequence, read N- to C-terminus: MTKSLLSLAVTAFILGGCSLIPDYQAPEAPVAAQWPQGPAYSPTQSADVAAAEQGWRQFFHDPALQQLIQTSLVNNRDLRVAALNLDAYRAQYRIQRADLFPAVSATGSGSRQRVPANMSQTGESGITSQYSATLGVSAYELDLFGRVRSLTEQALETYLSSEQARRSTQIALVASVANAYYTWQADQALFKLTEETLKTYEESYNLTRRSNEVGVASALDVSQARTAVEGARVKYSQYQRLVAQDVNSLTVLLGTGIPADLAKPLELDADQLAEVPAGLPSDILQRRPDIQEAEHLLKAANANIGAARAAFFPSISLTANAGSLSPDMGHLFSGGQGTWLFQPQINLPIFNAGSLKASLDYSKIQKDINVAKYEKTIQTAFQEVSDGLAARKTFEEQLQAQRDLVQANQDYYRLAERRYRIGIDSNLTFLDAQRNLFSAQQALIGDRLSQLTSEVNLYKALGGGWYEQTGQANQQASVETPKG.

The N-terminal stretch at 1–17 is a signal peptide; that stretch reads MTKSLLSLAVTAFILGG. Cys-18 is lipidated: N-palmitoyl cysteine. Cys-18 carries S-diacylglycerol cysteine lipidation.

Belongs to the outer membrane factor (OMF) (TC 1.B.17) family.

It is found in the cell outer membrane. Functionally, the outer membrane component of an antibiotic efflux pump. Confers resistance to numerous structurally unrelated antibiotics such as carbenicillin, chloramphenicol, erythromycin, novobiocin, streptomycin and tetracycline. Is not involved in organic solvent efflux. This chain is Antibiotic efflux pump outer membrane protein ArpC (arpC), found in Pseudomonas putida (Arthrobacter siderocapsulatus).